The sequence spans 440 residues: Protein ABHD8 (440 aa).

The disordered stretch occupies residues 123–158 (DPAGSDGRSAPGSGSGSGSGSGSGGRRRRARRPKRT). The segment covering 124–134 (PAGSDGRSAPG) has biased composition (low complexity). Residues 135-146 (SGSGSGSGSGSG) are compositionally biased toward gly residues. The span at 147–158 (GRRRRARRPKRT) shows a compositional bias: basic residues. The AB hydrolase-1 domain maps to 178–280 (VLFFIHGVGG…HKVIMINGGG (103 aa)). Active-site charge relay system residues include serine 253, aspartate 371, and histidine 399.

Belongs to the AB hydrolase superfamily. In terms of assembly, interacts with NLRP3 (via NACHT and LLR domains); this interaction is enhanced in the presence of NLRP3 inflammasome inducers, such as ATP, nigericin, silica, or alum. Interacts with ZDHHC12.

It localises to the cytoplasm. Its function is as follows. Negatively regulates NLRP3-driven inflammation. Promotes NLRP3 degradation through the chaperone-mediated autophagy (CMA) pathway, hence attenuating inflammasome activation and IL1B secretion. Acts by recruiting palmitoyltransferase ZDHHC12 to NLRP3, facilitating NLRP3 palmitoylation and subsequent degradation. The protein is Protein ABHD8 of Macaca fascicularis (Crab-eating macaque).